A 309-amino-acid polypeptide reads, in one-letter code: Short-chain dehydrogenase/reductase ARMGADRAFT_1048226 (309 aa).

Residues K64, D86, N113, and K145 each coordinate NADP(+). Catalysis depends on S167, which acts as the Proton donor. Y196 and K200 together coordinate NADP(+). Residue Y196 is the Proton acceptor of the active site. The Lowers pKa of active site Tyr role is filled by K200.

The protein belongs to the short-chain dehydrogenases/reductases (SDR) family.

The protein operates within secondary metabolite biosynthesis. Short-chain dehydrogenase/reductase, part of the gene cluster that mediates the biosynthesis of melleolides, a range of antifungal and phytotoxic polyketide derivatives composed of an orsellinic acid (OA) moiety esterified to various sesquiterpene alcohols. The first step in melleolides biosynthesis is performed by the delta(6)-protoilludene synthase PRO1 which catalyzes the cyclization of farnesyl diphosphate to protoilludene. The orsellinic acid synthase armB produces OA by condensing acetyl-CoA with 3 malonyl-CoA units in a three-round chain elongation reaction folowed by a C2-C7 ring closure. ArmB further catalyzes the trans-esterification of OA to the various sesquiterpene alcohols resulting from the hydroxylation of protoilludene. The melleolides cluster also includes 5 cytochrome P450 monooxygenases, 4 NAD(+)-dependent oxidoreductases, one flavin-dependent oxidoreductase, and one O-methyltransferase. The cytochrome P450 monooxygenases may be involved in protoilludene hydroxylation to elaborate melleolides with multiple alcohol groups, such as melleolide D, which carries alcohol functionalities at C-4, C-5, C-10, and C-13. The role of the NAD(+)-dependent enzymes remains unknown. Numerous melleolides, including arnamial, show 5'-O-methylation of the aromatic moiety which may be catalyzed by the methyltransferase encoded in the cluster. The flavin-dependent oxidoreductase might represent the dehydrogenase yielding the aldehyde in position 1 of arnamial and other melleolides. Finally, several halogenase localized outside of the cluster, are able to catalyze the transfer of a single chlorine atom to the melleolide backbone, resulting in a 6'-chloromelleolide product. The polypeptide is Short-chain dehydrogenase/reductase ARMGADRAFT_1048226 (Armillaria gallica (Bulbous honey fungus)).